The following is a 251-amino-acid chain: Ubiquinone/menaquinone biosynthesis C-methyltransferase UbiE (251 aa).

S-adenosyl-L-methionine-binding positions include T74, D95, and 123 to 124; that span reads NA.

It belongs to the class I-like SAM-binding methyltransferase superfamily. MenG/UbiE family.

It carries out the reaction a 2-demethylmenaquinol + S-adenosyl-L-methionine = a menaquinol + S-adenosyl-L-homocysteine + H(+). The catalysed reaction is a 2-methoxy-6-(all-trans-polyprenyl)benzene-1,4-diol + S-adenosyl-L-methionine = a 5-methoxy-2-methyl-3-(all-trans-polyprenyl)benzene-1,4-diol + S-adenosyl-L-homocysteine + H(+). Its pathway is quinol/quinone metabolism; menaquinone biosynthesis; menaquinol from 1,4-dihydroxy-2-naphthoate: step 2/2. It functions in the pathway cofactor biosynthesis; ubiquinone biosynthesis. Methyltransferase required for the conversion of demethylmenaquinol (DMKH2) to menaquinol (MKH2) and the conversion of 2-polyprenyl-6-methoxy-1,4-benzoquinol (DDMQH2) to 2-polyprenyl-3-methyl-6-methoxy-1,4-benzoquinol (DMQH2). This Shewanella frigidimarina (strain NCIMB 400) protein is Ubiquinone/menaquinone biosynthesis C-methyltransferase UbiE.